The chain runs to 252 residues: Small ribosomal subunit protein uS2 (252 aa).

This sequence belongs to the universal ribosomal protein uS2 family.

The chain is Small ribosomal subunit protein uS2 from Chlorobium phaeobacteroides (strain DSM 266 / SMG 266 / 2430).